The primary structure comprises 147 residues: Large ribosomal subunit protein uL16 (147 aa).

It belongs to the universal ribosomal protein uL16 family. As to quaternary structure, part of the 50S ribosomal subunit.

Binds 23S rRNA and is also seen to make contacts with the A and possibly P site tRNAs. The chain is Large ribosomal subunit protein uL16 from Lactobacillus delbrueckii subsp. bulgaricus (strain ATCC 11842 / DSM 20081 / BCRC 10696 / JCM 1002 / NBRC 13953 / NCIMB 11778 / NCTC 12712 / WDCM 00102 / Lb 14).